The chain runs to 231 residues: Uridylate kinase (231 aa).

Residue 6-9 participates in ATP binding; that stretch reads KLSG. Residues 14–19 form an involved in allosteric activation by GTP region; it reads GEGGRG. Glycine 49 and arginine 53 together coordinate ATP. UMP is bound by residues aspartate 66 and 127–134; that span reads TSNPFFTT. The ATP site is built by threonine 154, tyrosine 160, and aspartate 163.

Belongs to the UMP kinase family. In terms of assembly, homohexamer.

The protein resides in the cytoplasm. The catalysed reaction is UMP + ATP = UDP + ADP. Its pathway is pyrimidine metabolism; CTP biosynthesis via de novo pathway; UDP from UMP (UMPK route): step 1/1. With respect to regulation, allosterically activated by GTP. Inhibited by UTP. Functionally, catalyzes the reversible phosphorylation of UMP to UDP. The polypeptide is Uridylate kinase (Thermotoga maritima (strain ATCC 43589 / DSM 3109 / JCM 10099 / NBRC 100826 / MSB8)).